The chain runs to 117 residues: Large ribosomal subunit protein uL18 (117 aa).

This sequence belongs to the universal ribosomal protein uL18 family. Part of the 50S ribosomal subunit; part of the 5S rRNA/L5/L18/L25 subcomplex. Contacts the 5S and 23S rRNAs.

This is one of the proteins that bind and probably mediate the attachment of the 5S RNA into the large ribosomal subunit, where it forms part of the central protuberance. This is Large ribosomal subunit protein uL18 from Photorhabdus laumondii subsp. laumondii (strain DSM 15139 / CIP 105565 / TT01) (Photorhabdus luminescens subsp. laumondii).